A 232-amino-acid chain; its full sequence is Orotate phosphoribosyltransferase (232 aa).

5-phospho-alpha-D-ribose 1-diphosphate-binding positions include arginine 107, lysine 108, lysine 111, histidine 113, and 133-141; that span reads EDLTTAGGS. Threonine 137 is an orotate binding site.

It belongs to the purine/pyrimidine phosphoribosyltransferase family. PyrE subfamily. As to quaternary structure, homodimer. The cofactor is Mg(2+).

It carries out the reaction orotidine 5'-phosphate + diphosphate = orotate + 5-phospho-alpha-D-ribose 1-diphosphate. Its pathway is pyrimidine metabolism; UMP biosynthesis via de novo pathway; UMP from orotate: step 1/2. Its function is as follows. Catalyzes the transfer of a ribosyl phosphate group from 5-phosphoribose 1-diphosphate to orotate, leading to the formation of orotidine monophosphate (OMP). This is Orotate phosphoribosyltransferase from Sinorhizobium fredii (strain NBRC 101917 / NGR234).